The primary structure comprises 349 residues: N-formyl peptide receptor 3 (349 aa).

Topologically, residues 1–27 are extracellular; the sequence is METNFSIPLNETEEVLPEPAGHTVLWI. 2 N-linked (GlcNAc...) asparagine glycosylation sites follow: asparagine 4 and asparagine 10. A helical transmembrane segment spans residues 28 to 50; it reads FSLLVHGVTFIFGVLGNGLVIWV. Residues 51 to 61 are Cytoplasmic-facing; sequence AGFRMTRTVNT. The helical transmembrane segment at 62-83 threads the bilayer; sequence ICYLNLALADFSFSAILPFHMV. At 84-100 the chain is on the extracellular side; sequence SVAMREKWPFGTFLCKL. Cysteine 98 and cysteine 176 are joined by a disulfide. The helical transmembrane segment at 101-121 threads the bilayer; that stretch reads VHVMIDINLFVSVYLITIIAL. The Cytoplasmic segment spans residues 122–140; that stretch reads DRCICVLHPAWAQNHRTMS. A helical membrane pass occupies residues 141 to 162; it reads LAKRVMTGLWILTIVLTLPNFI. Over 163-205 the chain is Extracellular; sequence FWTTISTTNGDTYCIFNYPFWGDTVVERMNVFITMAKVSLILH. Residues 206–226 traverse the membrane as a helical segment; sequence FIIGFSIPMSIITVCYGIIVA. Over 227 to 242 the chain is Cytoplasmic; sequence KIHKKRMTKSSRPLHI. A helical membrane pass occupies residues 243-266; the sequence is FTAVVASFFICWFPYELTGILMAV. At 267 to 286 the chain is on the extracellular side; it reads WLKEILLNGKYKIILVLINP. A helical transmembrane segment spans residues 287–306; the sequence is TSSLAFFNSCLNPSLYVFMG. The Cytoplasmic segment spans residues 307–349; it reads HNFQERLIRSLPTSLERALTEVPDSAQTSNTHTTSASPPEETE. Positions 327-349 are disordered; the sequence is EVPDSAQTSNTHTTSASPPEETE. Residues 331–343 show a composition bias toward polar residues; sequence SAQTSNTHTTSAS.

Belongs to the G-protein coupled receptor 1 family.

Its subcellular location is the cell membrane. Low affinity receptor for N-formyl-methionyl peptides, which are powerful neutrophils chemotactic factors. Binding of FMLP to the receptor causes activation of neutrophils. This response is mediated via a G-protein that activates a phosphatidylinositol-calcium second messenger system. This is N-formyl peptide receptor 3 (FPR3) from Macaca mulatta (Rhesus macaque).